We begin with the raw amino-acid sequence, 300 residues long: Merozoite surface protein 2 (300 aa).

A signal peptide spans 1–20 (MKVIKTLSIINFFIFVTFNI). Asn22 and Asn36 each carry an N-linked (GlcNAc...) asparagine glycan. The interval 44-226 (EESKPPTGAV…EQTESPELQS (183 aa)) is polymorphic region. Residues 51–58 (GAVAGSGA) form a 1; inverted repeat. The tract at residues 51–110 (GAVAGSGAGAGSGAGAVAGSGAGAVAGSGAGAVAGSGAGAVAGSGAGAVAGSGAVAGSGA) is 7 X 8 AA tandem repeats of G-S-G-A-G-A-V-A. Repeat copies occupy residues 61-68 (GSGAGAVA), 69-76 (GSGAGAVA), 77-84 (GSGAGAVA), 85-92 (GSGAGAVA), and 93-100 (GSGAGAVA). The 7; inverted repeat unit spans residues 103-110 (GAVAGSGA). A disordered region spans residues 111–261 (GNGANPGADA…DSQKECTDGN (151 aa)). The span at 123-148 (SPSTPATTTTTTTTNDAEASTSTSSE) shows a compositional bias: low complexity. The segment covering 149–165 (NRNHNNAETNPKGKGEV) has biased composition (basic and acidic residues). 2 stretches are compositionally biased toward polar residues: residues 167–193 (KPNQ…NVPR) and 200–228 (KSPT…QSAP). The N-linked (GlcNAc...) asparagine glycan is linked to Asn177. Asn249 carries an N-linked (GlcNAc...) asparagine glycan. An intrachain disulfide couples Cys257 to Cys265. N-linked (GlcNAc...) asparagine glycans are attached at residues Asn273 and Asn274. Asn274 is lipidated: GPI-anchor amidated asparagine. A propeptide spans 275–300 (SSNIASINKFVVLISATLVLSFAIFI) (removed in mature form).

It is found in the cell membrane. In terms of biological role, may play a role in the merozoite attachment to the erythrocyte. In Plasmodium falciparum (isolate imr143), this protein is Merozoite surface protein 2.